The primary structure comprises 102 residues: MIPGEILTEPGQIELNVGRPTLTIAVVNEGDRPIQVGSHYHFAEANNALVFDRELATGYRLNIPAGNAVRFEPGMRRTVELVAVGGERRIFGFQGKVMGALK.

This sequence belongs to the urease beta subunit family. Heterotrimer of UreA (gamma), UreB (beta) and UreC (alpha) subunits. Three heterotrimers associate to form the active enzyme.

Its subcellular location is the cytoplasm. The catalysed reaction is urea + 2 H2O + H(+) = hydrogencarbonate + 2 NH4(+). The protein operates within nitrogen metabolism; urea degradation; CO(2) and NH(3) from urea (urease route): step 1/1. This chain is Urease subunit beta, found in Bordetella parapertussis (strain 12822 / ATCC BAA-587 / NCTC 13253).